Here is an 879-residue protein sequence, read N- to C-terminus: Fanconi anemia core complex-associated protein 100 (879 aa).

As to quaternary structure, belongs to the multisubunit FA complex composed of FANCA, FANCB, FANCC, FANCE, FANCF, FANCG, FANCL/PHF9, FANCM, FAAP24 and FAAP100. Forms a subcomplex with FANCB and FANCL.

It is found in the nucleus. Its function is as follows. Plays a role in Fanconi anemia-associated DNA damage response network. Regulates FANCD2 monoubiquitination and the stability of the FA core complex. Induces chromosomal instability as well as hypersensitivity to DNA cross-linking agents, when repressed. The sequence is that of Fanconi anemia core complex-associated protein 100 from Mus musculus (Mouse).